A 105-amino-acid polypeptide reads, in one-letter code: Ketoisovalerate oxidoreductase subunit VorD (105 aa).

4Fe-4S ferredoxin-type domains follow at residues 44 to 73 (FKPV…IKPD) and 74 to 103 (GYVA…MIKE). Positions 53, 56, 59, 63, 83, 86, 89, and 93 each coordinate [4Fe-4S] cluster.

Heterotetramer of one alpha, one beta, one delta and one gamma chain. It depends on [4Fe-4S] cluster as a cofactor.

It catalyses the reaction 3-methyl-2-oxobutanoate + 2 oxidized [2Fe-2S]-[ferredoxin] + CoA = 2-methylpropanoyl-CoA + 2 reduced [2Fe-2S]-[ferredoxin] + CO2 + H(+). This Pyrococcus furiosus (strain ATCC 43587 / DSM 3638 / JCM 8422 / Vc1) protein is Ketoisovalerate oxidoreductase subunit VorD (vorD).